Consider the following 235-residue polypeptide: Small ribosomal subunit protein uS2 (235 aa).

The protein belongs to the universal ribosomal protein uS2 family.

The protein is Small ribosomal subunit protein uS2 of Thermoanaerobacter sp. (strain X514).